We begin with the raw amino-acid sequence, 824 residues long: Cell division cycle protein 27 homolog (824 aa).

TPR repeat units lie at residues 6–35, 38–65, 67–99, and 115–145; these read EPVQAAIWQALNHYAYRDAVFLAERLYAEV, EEALFLLATCYYRSGKAYKAYRLLKGHS, TTPQCKYLLAKCCVDLSKLAEGEQILSGGVFNK, and CFTLSLLGHVYCKTDRLAKGSECYQKSLSLN. Residues T205, T209, and T244 each carry the phosphothreonine modification. Positions 287-422 are disordered; the sequence is LETPSPGDGS…TNKGGITQPN (136 aa). Position 291 is a phosphoserine (S291). A Phosphothreonine modification is found at T313. Residues 326–341 show a composition bias toward polar residues; sequence QTGTKSVFSQSGNSRE. Phosphoserine is present on S339. Residues 348-361 show a composition bias toward low complexity; that stretch reads QTQSSGPQTSTTPQ. The segment covering 362–371 has biased composition (polar residues); that stretch reads VLSPTITSPP. Position 366 is a phosphothreonine (T366). Phosphoserine occurs at positions 379 and 386. The segment covering 380–390 has biased composition (polar residues); it reads RLFTSDSSTTK. Basic residues predominate over residues 395–413; sequence KLKMKFPPKIPNRKTKSKT. S426 carries the phosphoserine modification. T430 bears the Phosphothreonine mark. Phosphoserine is present on residues S435 and S438. T446 bears the Phosphothreonine mark. TPR repeat units lie at residues 465-495, 499-528, 533-563, 567-598, 601-631, 635-667, 670-702, 704-734, and 737-768; these read LLREMGKGYLALCSYNCKEAINILSHLPSHH, GWVLCQIGRAYFELSEYMQAERIFSEVRRI, VEGMEIYSTTLWHLQKDVALSVLSKDLTDMD, PEAWCAAGNCFSLQREHDIAIKFFQRAIQVDP, AYAYTLLGHEFVLTEELDKALACFRNAIRVN, YNAWYGLGMIYYKQEKFSLAEMHFQKALDINPQ, VLLCHIGVVQHALKKSEKALDTLNKAIVIDPKN, LCKFHRASVLFANEKYKSALQELEELKQIVP, and SLVYFLIGKVYKKLGQTHLALMNFSWAMDLDP. The tract at residues 781–824 is disordered; that stretch reads KRYLPDDEEPITQEEQIMGTDESQESSMTDADDTQLHAAESDEF. S821 is subject to Phosphoserine.

Belongs to the APC3/CDC27 family. In terms of assembly, homodimer. The mammalian APC/C is composed at least of 14 distinct subunits ANAPC1, ANAPC2, CDC27/APC3, ANAPC4, ANAPC5, CDC16/APC6, ANAPC7, CDC23/APC8, ANAPC10, ANAPC11, CDC26/APC12, ANAPC13, ANAPC15 and ANAPC16 that assemble into a complex of at least 19 chains with a combined molecular mass of around 1.2 MDa; APC/C interacts with FZR1 and FBXO5. Interacts with RB. Interacts with FAM168B/MANI. Interacts with MCPH1. Phosphorylated. Phosphorylation on Ser-426 and Thr-446 occurs specifically during mitosis.

The protein resides in the nucleus. It localises to the cytoplasm. The protein localises to the cytoskeleton. Its subcellular location is the spindle. It participates in protein modification; protein ubiquitination. In terms of biological role, component of the anaphase promoting complex/cyclosome (APC/C), a cell cycle-regulated E3 ubiquitin ligase that controls progression through mitosis and the G1 phase of the cell cycle. The APC/C complex acts by mediating ubiquitination and subsequent degradation of target proteins: it mainly mediates the formation of 'Lys-11'-linked polyubiquitin chains and, to a lower extent, the formation of 'Lys-48'- and 'Lys-63'-linked polyubiquitin chains. The APC/C complex catalyzes assembly of branched 'Lys-11'-/'Lys-48'-linked branched ubiquitin chains on target proteins. The polypeptide is Cell division cycle protein 27 homolog (CDC27) (Homo sapiens (Human)).